Here is a 480-residue protein sequence, read N- to C-terminus: Aspartyl/glutamyl-tRNA(Asn/Gln) amidotransferase subunit B (480 aa).

This sequence belongs to the GatB/GatE family. GatB subfamily. Heterotrimer of A, B and C subunits.

It catalyses the reaction L-glutamyl-tRNA(Gln) + L-glutamine + ATP + H2O = L-glutaminyl-tRNA(Gln) + L-glutamate + ADP + phosphate + H(+). It carries out the reaction L-aspartyl-tRNA(Asn) + L-glutamine + ATP + H2O = L-asparaginyl-tRNA(Asn) + L-glutamate + ADP + phosphate + 2 H(+). Functionally, allows the formation of correctly charged Asn-tRNA(Asn) or Gln-tRNA(Gln) through the transamidation of misacylated Asp-tRNA(Asn) or Glu-tRNA(Gln) in organisms which lack either or both of asparaginyl-tRNA or glutaminyl-tRNA synthetases. The reaction takes place in the presence of glutamine and ATP through an activated phospho-Asp-tRNA(Asn) or phospho-Glu-tRNA(Gln). The chain is Aspartyl/glutamyl-tRNA(Asn/Gln) amidotransferase subunit B from Streptococcus pneumoniae serotype 19F (strain G54).